Here is a 336-residue protein sequence, read N- to C-terminus: Alpha-glucoside transport system permease protein AglF (336 aa).

Transmembrane regions (helical) follow at residues 4-24 (LIAAILTMVAGVLVCAAYFWS), 55-75 (PWLFLAPALLALTLYLVYPVV), 113-133 (FLWLLVVPALSTFFGLIIAAL), 146-166 (LIFMPMAISFVGAAVIWKFIY), 176-196 (IGLLNAIVVALGGEPQAWITL), 202-222 (FFLMVILIWIQTGFAMVILSA), 258-278 (IAVVWTTITILVLKVFDIVLA), and 304-324 (FGRGAAIAVVIMILVVPIMIW). The region spanning 109–325 (IFNNFLWLLV…ILVVPIMIWN (217 aa)) is the ABC transmembrane type-1 domain.

It belongs to the binding-protein-dependent transport system permease family. MalFG subfamily.

The protein resides in the cell inner membrane. Part of the binding-protein-dependent transport system for alpha-glucosides such as sucrose, maltose and trehalose. Probably responsible for the translocation of the substrate across the membrane. The sequence is that of Alpha-glucoside transport system permease protein AglF (aglF) from Rhizobium meliloti (strain 1021) (Ensifer meliloti).